The sequence spans 198 residues: ATP-dependent Clp protease proteolytic subunit (198 aa).

The active-site Nucleophile is the Ser-98. His-123 is an active-site residue.

It belongs to the peptidase S14 family. As to quaternary structure, fourteen ClpP subunits assemble into 2 heptameric rings which stack back to back to give a disk-like structure with a central cavity, resembling the structure of eukaryotic proteasomes.

Its subcellular location is the cytoplasm. It carries out the reaction Hydrolysis of proteins to small peptides in the presence of ATP and magnesium. alpha-casein is the usual test substrate. In the absence of ATP, only oligopeptides shorter than five residues are hydrolyzed (such as succinyl-Leu-Tyr-|-NHMec, and Leu-Tyr-Leu-|-Tyr-Trp, in which cleavage of the -Tyr-|-Leu- and -Tyr-|-Trp bonds also occurs).. Cleaves peptides in various proteins in a process that requires ATP hydrolysis. Has a chymotrypsin-like activity. Plays a major role in the degradation of misfolded proteins. This is ATP-dependent Clp protease proteolytic subunit from Levilactobacillus brevis (strain ATCC 367 / BCRC 12310 / CIP 105137 / JCM 1170 / LMG 11437 / NCIMB 947 / NCTC 947) (Lactobacillus brevis).